We begin with the raw amino-acid sequence, 374 residues long: Alanine racemase (374 aa).

K34 functions as the Proton acceptor; specific for D-alanine in the catalytic mechanism. K34 carries the N6-(pyridoxal phosphate)lysine modification. R138 contacts substrate. The Proton acceptor; specific for L-alanine role is filled by Y265. M313 is a substrate binding site.

This sequence belongs to the alanine racemase family. Pyridoxal 5'-phosphate is required as a cofactor.

It catalyses the reaction L-alanine = D-alanine. Its pathway is amino-acid biosynthesis; D-alanine biosynthesis; D-alanine from L-alanine: step 1/1. Its function is as follows. Catalyzes the interconversion of L-alanine and D-alanine. May also act on other amino acids. This is Alanine racemase (alr) from Hahella chejuensis (strain KCTC 2396).